The sequence spans 338 residues: Ferredoxin--NADP reductase (338 aa).

FAD contacts are provided by aspartate 35, glutamine 43, tyrosine 48, alanine 88, phenylalanine 122, aspartate 289, and threonine 330.

This sequence belongs to the ferredoxin--NADP reductase type 2 family. Homodimer. FAD serves as cofactor.

The catalysed reaction is 2 reduced [2Fe-2S]-[ferredoxin] + NADP(+) + H(+) = 2 oxidized [2Fe-2S]-[ferredoxin] + NADPH. The protein is Ferredoxin--NADP reductase of Ehrlichia canis (strain Jake).